The sequence spans 277 residues: Coiled-coil domain-containing protein 117 (277 aa).

Residues 22–69 (SPPAFAGRAFPPGAAGHDLAPRPGVRGPPSSPDGRTARGRVSIHCRKK) are disordered. Residues 23-55 (PPAFAGRAFPPGAAGHDLAPRPGVRGPPSSPDG) are compositionally biased toward low complexity. The residue at position 47 (arginine 47) is an Omega-N-methylarginine. Serine 52 carries the phosphoserine modification. Residues 58–69 (ARGRVSIHCRKK) show a composition bias toward basic residues. The stretch at 139–166 (QCEVARRRLQEIEDRIIDEDEEVESDRN) forms a coiled coil. 2 disordered regions span residues 216–242 (LSEK…ATGT) and 255–277 (QCTD…EMEL). Positions 225–242 (NPKNYMGESQTKHTATGT) are enriched in polar residues.

As to quaternary structure, interacts with CIAO2B; the interaction is direct. Interacts with MMS19; the interaction is indirect.

It is found in the cytoplasm. It localises to the cytoskeleton. The protein localises to the spindle. The protein resides in the nucleus. In terms of biological role, facilitates DNA repair, cell cycle progression, and cell proliferation through its interaction with CIAO2B. The sequence is that of Coiled-coil domain-containing protein 117 from Rattus norvegicus (Rat).